A 122-amino-acid polypeptide reads, in one-letter code: Large ribosomal subunit protein bL12 (122 aa).

This sequence belongs to the bacterial ribosomal protein bL12 family. Homodimer. Part of the ribosomal stalk of the 50S ribosomal subunit. Forms a multimeric L10(L12)X complex, where L10 forms an elongated spine to which 2 to 4 L12 dimers bind in a sequential fashion. Binds GTP-bound translation factors.

In terms of biological role, forms part of the ribosomal stalk which helps the ribosome interact with GTP-bound translation factors. Is thus essential for accurate translation. This Staphylococcus aureus (strain Mu50 / ATCC 700699) protein is Large ribosomal subunit protein bL12.